An 803-amino-acid chain; its full sequence is 3',5'-cyclic-AMP phosphodiesterase 4D (803 aa).

The segment at 1–103 is disordered; the sequence is MEAEGSSVPA…SGASRVRHRG (103 aa). Residues His52 and His56 each carry the phosphoserine modification. The span at 58 to 85 shows a compositional bias: pro residues; it reads PPPPPPSPQPQLQPPPPPPLPPPPPPPG. 5 positions are modified to phosphoserine: Ser137, Ser294, Ser296, Ser343, and Ser370. Residues 338-358 are disordered; it reads EVEIPSPTQKEKEKKKRPMSQ. Residues 381–710 form the PDEase domain; the sequence is VKTEQEDVLA…EWYQSTIPQS (330 aa). Residue Lys382 forms a Glycyl lysine isopeptide (Lys-Gly) (interchain with G-Cter in SUMO) linkage. The active-site Proton donor is the His457. A 3',5'-cyclic AMP-binding site is contributed by His457. AMP is bound at residue His457. Positions 461, 497, 498, and 615 each coordinate Zn(2+). AMP-binding residues include Asp498, Asp615, Asn618, Gln666, and Phe669. Asp498 contributes to the Mg(2+) binding site. Asp498 serves as a coordination point for Mn(2+). The 3',5'-cyclic AMP site is built by Gln666 and Phe669. 2 disordered regions span residues 705–724 and 732–803; these read STIP…GRQG and ELTL…CPDT. Residues 757 to 768 are compositionally biased toward polar residues; it reads CSDSKTLCTQDS. Over residues 774-789 the composition is skewed to acidic residues; it reads PLDEQVEEEAVAEEES.

The protein belongs to the cyclic nucleotide phosphodiesterase family. PDE4 subfamily. In terms of assembly, homodimer for the long isoforms. Isoforms with truncated N-termini are monomeric. Binds ARRB2. Isoform 33 is part of a ternary complex containing PRKAR2A, PRKAR2B and AKAP9. Identified in a complex composed of RYR1, PDE4D, PKA, FKBP1A and protein phosphatase 1 (PP1). Interacts with PDE4DIP. Isoform 5 interacts (via N-terminal region) with SHANK2 (via proline-rich region); the interaction is increased in a PKA-dependent manner. Isoform 33, isoform 4, isoform 7, isoform 8 and isoform 9 but not isoform 32 and isoform 6 interact with SHANK2. Isoform 31 interacts weakly with SHANK2. Zn(2+) serves as cofactor. Mg(2+) is required as a cofactor. The cofactor is Mn(2+). In terms of processing, isoform 1 and isoform 9 are rapidly activated by PKA through phosphorylation. Long isoforms that share a conserved PKA phosphorylation site in the N-terminus are also activated. Post-translationally, sumoylation of long isoforms by PIAS4 augments their activation by PKA phosphorylation and represses their inhibition by ERK phosphorylation. In terms of tissue distribution, expressed in epithelial cells. Isoform 33, isoform 4, isoform 5 and isoform 9 are expressed in brain. Isoform 33, isoform 5, isoform 8 and isoform 9 are expressed in heart (at protein level). Isoform 4 and isoform 6 are strongly expressed in cortex and cerebellum. Isoform 7 is strongly expressed in cortex and testis; weakly expressed in kidney, lung, spleen and cerebellum. Isoform 8 is strongly expressed in lung, heart and liver. Isoform 31, isoform 32, isoform 33, isoform 5 and isoform 9 are widely distributed.

It localises to the apical cell membrane. The protein localises to the cytoplasm. Its subcellular location is the membrane. It is found in the cytoskeleton. The protein resides in the microtubule organizing center. It localises to the centrosome. It catalyses the reaction 3',5'-cyclic AMP + H2O = AMP + H(+). The protein operates within purine metabolism; 3',5'-cyclic AMP degradation; AMP from 3',5'-cyclic AMP: step 1/1. Activated by phosphatidic acid. Inhibited by rolipram. Hydrolyzes the second messenger cAMP, which is a key regulator of many important physiological processes. The protein is 3',5'-cyclic-AMP phosphodiesterase 4D (Pde4d) of Rattus norvegicus (Rat).